The following is a 460-amino-acid chain: ATP synthase subunit beta (460 aa).

150–157 (GGAGVGKT) lines the ATP pocket.

Belongs to the ATPase alpha/beta chains family. As to quaternary structure, F-type ATPases have 2 components, CF(1) - the catalytic core - and CF(0) - the membrane proton channel. CF(1) has five subunits: alpha(3), beta(3), gamma(1), delta(1), epsilon(1). CF(0) has three main subunits: a(1), b(2) and c(9-12). The alpha and beta chains form an alternating ring which encloses part of the gamma chain. CF(1) is attached to CF(0) by a central stalk formed by the gamma and epsilon chains, while a peripheral stalk is formed by the delta and b chains.

The protein localises to the cell inner membrane. The enzyme catalyses ATP + H2O + 4 H(+)(in) = ADP + phosphate + 5 H(+)(out). Functionally, produces ATP from ADP in the presence of a proton gradient across the membrane. The catalytic sites are hosted primarily by the beta subunits. This is ATP synthase subunit beta from Photorhabdus laumondii subsp. laumondii (strain DSM 15139 / CIP 105565 / TT01) (Photorhabdus luminescens subsp. laumondii).